The following is a 64-amino-acid chain: Large ribosomal subunit protein bL35 (64 aa).

The protein belongs to the bacterial ribosomal protein bL35 family.

The protein is Large ribosomal subunit protein bL35 of Clavibacter michiganensis subsp. michiganensis (strain NCPPB 382).